The primary structure comprises 529 residues: DEP domain-containing protein 1B (529 aa).

The 85-residue stretch at 24–108 (FRAKMPLRKH…DNRHLYRFPP (85 aa)) folds into the DEP domain. Phosphoserine is present on serine 160. The Rho-GAP domain maps to 201–393 (DSLEEVLDVK…FLMDNYQEIL (193 aa)). Phosphoserine is present on serine 436.

This chain is DEP domain-containing protein 1B (DEPDC1B), found in Homo sapiens (Human).